Here is a 295-residue protein sequence, read N- to C-terminus: UTP--glucose-1-phosphate uridylyltransferase (295 aa).

This sequence belongs to the UDPGP type 2 family.

The enzyme catalyses alpha-D-glucose 1-phosphate + UTP + H(+) = UDP-alpha-D-glucose + diphosphate. In terms of biological role, may play a role in stationary phase survival. The protein is UTP--glucose-1-phosphate uridylyltransferase (galU) of Haemophilus influenzae (strain ATCC 51907 / DSM 11121 / KW20 / Rd).